Reading from the N-terminus, the 631-residue chain is MTIRSLPALSPLALSVRVLLMAGSLALGNVATAASTPAAPAGKNVTWEDIANDHLTTQDVLQYGMGTNAQRWSPLAQVNDKNVFKLTPAWSYSFGDEKQRGQESQAIVSDGVVYVTGSYSRVFALDAKTGKRLWTYNHRLPDNIRPCCDVVNRGAAIYGDKIYFGTLDARVIALDKRTGKVVWNKKFGDHSAGYTMTGAPVLIKDKTSGKVLLIHGSSGDEFGVVGQLFARDPDTGEEVWMRPFVEGHMGRLNGKDSTPTGDVKAPSWPDDPTTETGKVEAWSHGGGAPWQSASFDPETNTIIVGAGNPGPWNTWARTSKDGNPHDFDSLYTSGQVGVDPSTGEVKWFYQHTPNDAWDFSGNNELVLFDYKDKNGNVVKATAHADRNGFFYVVDRNNGKLQNAFPFVDNITWASHIDLKTGRPVENPGQRPAKPLPGETKGKPVEVSPPFLGGKNWNPMAYSQDTGLFYIPGNQWKEEYWTEEVNYKKGSAYLGMGFRIKRMYDDHVGTLRAMDPTTGKLVWEHKEHLPLWAGVLATKGNLVFTGTGDGFFKAFDAKTGKELWKFQTGSGIVSPPITWEQDGEQYIGVTVGYGGAVPLWGGDMAELTKPVAQGGSFWVFKIPSWDNKTAQR.

An N-terminal signal peptide occupies residues 1–33 (MTIRSLPALSPLALSVRVLLMAGSLALGNVATA). Ca(2+) contacts are provided by aspartate 53, threonine 56, and aspartate 59. Glutamate 103 is a binding site for pyrroloquinoline quinone. Cysteine 147 and cysteine 148 are disulfide-bonded. Residues arginine 153, threonine 197, and 215–217 (HGS) contribute to the pyrroloquinoline quinone site. Glutamate 221 is a Ca(2+) binding site. Positions 250–286 (GRLNGKDSTPTGDVKAPSWPDDPTTETGKVEAWSHGG) are disordered. Ca(2+)-binding residues include asparagine 308 and aspartate 358. The Proton acceptor role is filled by aspartate 358. Arginine 386 contacts pyrroloquinoline quinone. Residues 421-443 (GRPVENPGQRPAKPLPGETKGKP) form a disordered region. Pyrroloquinoline quinone-binding residues include tryptophan 531 and alanine 595.

The protein belongs to the bacterial PQQ dehydrogenase family. As to quaternary structure, homodimer. Interacts with cytochrome c550. The cofactor is pyrroloquinoline quinone. Ca(2+) serves as cofactor. In terms of processing, the disulfide ring formed between the two adjacent cysteine residues Cys-147 and Cys-148 is essential for efficient electron transfer at pH 7 from PedE to its natural electron acceptor cytochrome c550.

The protein resides in the periplasm. It carries out the reaction a primary alcohol + 2 Fe(III)-[cytochrome c] = an aldehyde + 2 Fe(II)-[cytochrome c] + 2 H(+). The catalysed reaction is ethanol + 2 Fe(III)-[cytochrome c] = acetaldehyde + 2 Fe(II)-[cytochrome c] + 2 H(+). The enzyme catalyses butan-1-ol + 2 Fe(III)-[cytochrome c] = butanal + 2 Fe(II)-[cytochrome c] + 2 H(+). It catalyses the reaction butan-2-ol + 2 Fe(III)-[cytochrome c] = butan-2-one + 2 Fe(II)-[cytochrome c] + 2 H(+). It carries out the reaction 2-phenylethanol + 2 Fe(III)-[cytochrome c] = 2-phenylacetaldehyde + 2 Fe(II)-[cytochrome c] + 2 H(+). The catalysed reaction is octan-1-ol + 2 Fe(III)-[cytochrome c] = octanal + 2 Fe(II)-[cytochrome c] + 2 H(+). The enzyme catalyses hexan-1-ol + 2 Fe(III)-[cytochrome c] = hexanal + 2 Fe(II)-[cytochrome c] + 2 H(+). It catalyses the reaction cinnamyl alcohol + 2 Fe(III)-[cytochrome c] = cinnamaldehyde + 2 Fe(II)-[cytochrome c] + 2 H(+). It carries out the reaction farnesol + 2 Fe(III)-[cytochrome c] = farnesal + 2 Fe(II)-[cytochrome c] + 2 H(+). The catalysed reaction is an aldehyde + 2 Fe(III)-[cytochrome c] + H2O = a carboxylate + 2 Fe(II)-[cytochrome c] + 3 H(+). The enzyme catalyses acetaldehyde + 2 Fe(III)-[cytochrome c] + H2O = 2 Fe(II)-[cytochrome c] + acetate + 3 H(+). It catalyses the reaction butanal + 2 Fe(III)-[cytochrome c] + H2O = butanoate + 2 Fe(II)-[cytochrome c] + 3 H(+). It carries out the reaction hexanal + 2 Fe(III)-[cytochrome c] + H2O = hexanoate + 2 Fe(II)-[cytochrome c] + 3 H(+). The catalysed reaction is octanal + 2 Fe(III)-[cytochrome c] + H2O = octanoate + 2 Fe(II)-[cytochrome c] + 3 H(+). Its function is as follows. Alcohol dehydrogenase that catalyzes the oxidation of a range of substrates, including linear and aromatic primary and secondary alcohols, as well as aldehydes, allowing bacterial growth with a variety of volatile organic compounds (VOCs) as carbon and energy sources. Uses a specific inducible cytochrome c550, encoded by the adjacent gene in the locus, as electron acceptor. This Pseudomonas putida (strain ATCC 47054 / DSM 6125 / CFBP 8728 / NCIMB 11950 / KT2440) protein is Quinoprotein alcohol dehydrogenase PedE.